Consider the following 223-residue polypeptide: Ubiquitin carboxyl-terminal hydrolase isozyme L1 (223 aa).

Met-1 is modified (N-acetylmethionine). The region spanning 2–221 is the UCH catalytic domain; that stretch reads QLKPMEINPE…VRFSAVALCK (220 aa). Positions 5–10 are interaction with ubiquitin; sequence PMEINP. The active-site Nucleophile is the Cys-90. Ser-125 carries the post-translational modification Phosphoserine. His-161 (proton donor) is an active-site residue. The segment at 211-216 is interaction with ubiquitin; that stretch reads EVRFSA. Cys-220 carries S-farnesyl cysteine lipidation. A propeptide spans 221 to 223 (removed in mature form); it reads KCA.

Belongs to the peptidase C12 family. Monomer. Homodimer. Interacts with COPS5 and SNCA. O-glycosylated.

It is found in the cytoplasm. It localises to the endoplasmic reticulum membrane. It carries out the reaction Thiol-dependent hydrolysis of ester, thioester, amide, peptide and isopeptide bonds formed by the C-terminal Gly of ubiquitin (a 76-residue protein attached to proteins as an intracellular targeting signal).. Ubiquitin-protein hydrolase involved both in the processing of ubiquitin precursors and of ubiquitinated proteins. This enzyme is a thiol protease that recognizes and hydrolyzes a peptide bond at the C-terminal glycine of ubiquitin. Also binds to free monoubiquitin and may prevent its degradation in lysosomes. The homodimer may have ATP-independent ubiquitin ligase activity. This is Ubiquitin carboxyl-terminal hydrolase isozyme L1 (UCHL1) from Monodelphis domestica (Gray short-tailed opossum).